Consider the following 589-residue polypeptide: MAISVQHVVVLLLSTLLIAITFFLFTSDNARFPFPSLSTTDYYTPIPKSPIPHRIVDVSSDQTPQKMKLNTSLEVGELKWDLCKGAESVDYIPCLDNYAAIKQLKSRRHMEHRERHCPEPSPKCLLPLPDNYKPPVPWPKSRDMIWYDNVPHPKLVEYKKEQNWVKKEGEFLVFPGGGTQFKFGVTHYVEFIEKALPSIKWGKNIRVVLDVGCGVASFGGSLLDKDVITMSFAPKDEHEAQIQFALERGIPATLSVIGTQQLTFPSNAFDLIHCARCRVHWDADGGKPLLELNRVLRPGGFFIWSATPVYRDNDRDSRIWNEMVSLTKSICWKVVTKTVDSSGIGLVIYQKPTSESCYNKRSTQDPPLCDKKEANGSWYVPLAKCLSKLPSGNVQSWPELWPKRLVSVKPQSISVKAETLKKDTEKWSASVSDVYLKHLAVNWSTVRNVMDMNAGFGGFAAALINLPLWVMNVVPVDKPDTLSVVYDRGLIGVYHDWCESVNTYPRTYDLLHSSFLLGDLTQRCEIVQVVAEIDRIVRPGGYLVVQDNMETIMKLESILGSLHWSTKIYEDRFLVGRKGFWRPAKPELR.

The Cytoplasmic portion of the chain corresponds to 1–4 (MAIS). A helical; Signal-anchor for type II membrane protein transmembrane segment spans residues 5–25 (VQHVVVLLLSTLLIAITFFLF). The Lumenal portion of the chain corresponds to 26–589 (TSDNARFPFP…FWRPAKPELR (564 aa)). Asn-70, Asn-375, and Asn-442 each carry an N-linked (GlcNAc...) asparagine glycan.

Belongs to the methyltransferase superfamily.

Its subcellular location is the golgi apparatus membrane. This Arabidopsis thaliana (Mouse-ear cress) protein is Probable methyltransferase PMT23.